The sequence spans 229 residues: Putative N-acetylmannosamine-6-phosphate 2-epimerase (229 aa).

It belongs to the NanE family.

It carries out the reaction an N-acyl-D-glucosamine 6-phosphate = an N-acyl-D-mannosamine 6-phosphate. It participates in amino-sugar metabolism; N-acetylneuraminate degradation; D-fructose 6-phosphate from N-acetylneuraminate: step 3/5. In terms of biological role, converts N-acetylmannosamine-6-phosphate (ManNAc-6-P) to N-acetylglucosamine-6-phosphate (GlcNAc-6-P). The sequence is that of Putative N-acetylmannosamine-6-phosphate 2-epimerase from Actinobacillus pleuropneumoniae serotype 5b (strain L20).